Reading from the N-terminus, the 116-residue chain is Phosphoribosyl-AMP cyclohydrolase (116 aa).

Residue Asp-78 participates in Mg(2+) binding. Position 79 (Cys-79) interacts with Zn(2+). Mg(2+) is bound by residues Asp-80 and Asp-82. 2 residues coordinate Zn(2+): Cys-95 and Cys-102.

The protein belongs to the PRA-CH family. Homodimer. The cofactor is Mg(2+). Zn(2+) is required as a cofactor.

The protein resides in the cytoplasm. The catalysed reaction is 1-(5-phospho-beta-D-ribosyl)-5'-AMP + H2O = 1-(5-phospho-beta-D-ribosyl)-5-[(5-phospho-beta-D-ribosylamino)methylideneamino]imidazole-4-carboxamide. The protein operates within amino-acid biosynthesis; L-histidine biosynthesis; L-histidine from 5-phospho-alpha-D-ribose 1-diphosphate: step 3/9. Its function is as follows. Catalyzes the hydrolysis of the adenine ring of phosphoribosyl-AMP. This Acidiphilium cryptum (strain JF-5) protein is Phosphoribosyl-AMP cyclohydrolase.